The sequence spans 293 residues: Acetylglutamate kinase (293 aa).

Substrate is bound by residues Gly-68–Gly-69, Arg-90, and Asn-189.

This sequence belongs to the acetylglutamate kinase family. ArgB subfamily.

The protein localises to the cytoplasm. It carries out the reaction N-acetyl-L-glutamate + ATP = N-acetyl-L-glutamyl 5-phosphate + ADP. It functions in the pathway amino-acid biosynthesis; L-arginine biosynthesis; N(2)-acetyl-L-ornithine from L-glutamate: step 2/4. Functionally, catalyzes the ATP-dependent phosphorylation of N-acetyl-L-glutamate. The sequence is that of Acetylglutamate kinase from Mycobacterium marinum (strain ATCC BAA-535 / M).